Consider the following 447-residue polypeptide: ATP-dependent protease ATPase subunit HslU (447 aa).

Residues Ile18, Gly60–Glu65, Asp259, Glu325, and Arg397 each bind ATP.

The protein belongs to the ClpX chaperone family. HslU subfamily. A double ring-shaped homohexamer of HslV is capped on each side by a ring-shaped HslU homohexamer. The assembly of the HslU/HslV complex is dependent on binding of ATP.

It localises to the cytoplasm. Functionally, ATPase subunit of a proteasome-like degradation complex; this subunit has chaperone activity. The binding of ATP and its subsequent hydrolysis by HslU are essential for unfolding of protein substrates subsequently hydrolyzed by HslV. HslU recognizes the N-terminal part of its protein substrates and unfolds these before they are guided to HslV for hydrolysis. This Burkholderia ambifaria (strain MC40-6) protein is ATP-dependent protease ATPase subunit HslU.